Here is a 101-residue protein sequence, read N- to C-terminus: Small ribosomal subunit protein uS14 (101 aa).

Positions 1–20 (MAKTSQVNRNKRREKMAARD) are disordered.

It belongs to the universal ribosomal protein uS14 family. As to quaternary structure, part of the 30S ribosomal subunit. Contacts proteins S3 and S10.

In terms of biological role, binds 16S rRNA, required for the assembly of 30S particles and may also be responsible for determining the conformation of the 16S rRNA at the A site. This is Small ribosomal subunit protein uS14 from Acidiphilium cryptum (strain JF-5).